Reading from the N-terminus, the 421-residue chain is Myb-related protein Pp2 (421 aa).

HTH myb-type domains lie at 9 to 61 and 62 to 116; these read KVGL…TNYL and RPDL…KKRL. 2 DNA-binding regions (H-T-H motif) span residues 37-61 and 89-112; these read WRAI…TNYL and WSRI…NTRL. The tract at residues 119–240 is disordered; sequence QGLDPNTHLP…VTTKSHEDHR (122 aa). A compositionally biased stretch (acidic residues) spans 136–147; sequence DTEDDTDDEGGD.

Its subcellular location is the nucleus. Its function is as follows. Possible transcription activator. This is Myb-related protein Pp2 (PP2) from Physcomitrium patens (Spreading-leaved earth moss).